Reading from the N-terminus, the 57-residue chain is Large ribosomal subunit protein bL32B (57 aa).

This sequence belongs to the bacterial ribosomal protein bL32 family.

The protein is Large ribosomal subunit protein bL32B of Listeria welshimeri serovar 6b (strain ATCC 35897 / DSM 20650 / CCUG 15529 / CIP 8149 / NCTC 11857 / SLCC 5334 / V8).